The chain runs to 546 residues: Chaperonin GroEL (546 aa).

Residues 30–33, Lys51, 87–91, Gly415, 479–481, and Asp495 contribute to the ATP site; these read TLGP, DGTTT, and NAA. The tract at residues 526–546 is disordered; sequence KEDAPMPGGMPGGMGGMGMDM. Residues 534–546 are compositionally biased toward gly residues; it reads GMPGGMGGMGMDM.

The protein belongs to the chaperonin (HSP60) family. As to quaternary structure, forms a cylinder of 14 subunits composed of two heptameric rings stacked back-to-back. Interacts with the co-chaperonin GroES.

Its subcellular location is the cytoplasm. It catalyses the reaction ATP + H2O + a folded polypeptide = ADP + phosphate + an unfolded polypeptide.. Its function is as follows. Together with its co-chaperonin GroES, plays an essential role in assisting protein folding. The GroEL-GroES system forms a nano-cage that allows encapsulation of the non-native substrate proteins and provides a physical environment optimized to promote and accelerate protein folding. In Burkholderia cepacia (Pseudomonas cepacia), this protein is Chaperonin GroEL.